A 319-amino-acid chain; its full sequence is Putative olfactory receptor 52L2 (319 aa).

Topologically, residues 1 to 43 are extracellular; sequence MNLDSFFSFLLKSLIMALSNSSWRLPQPSFFLVGIPGLEESQH. Asn-20 is a glycosylation site (N-linked (GlcNAc...) asparagine). Residues 44–64 traverse the membrane as a helical segment; that stretch reads WIALPLGILYLLALVGNVTIL. Over 65–72 the chain is Cytoplasmic; that stretch reads FIIWMDPS. The helical transmembrane segment at 73 to 93 threads the bilayer; that stretch reads LHQSMYLFLSMLAAIDLVVAS. The Extracellular segment spans residues 94-117; it reads STAPKALAVLLVRAQEIGYTVCLI. Cys-115 and Cys-207 form a disulfide bridge. A helical transmembrane segment spans residues 118–138; sequence QMFFTHAFSSMESGVLVAMAL. The Cytoplasmic portion of the chain corresponds to 139–157; that stretch reads DRYVAICHPLHHSTILHPG. The chain crosses the membrane as a helical span at residues 158-178; that stretch reads VIGHIGMVVLVRGLLLLIPFL. Residues 179–214 are Extracellular-facing; it reads ILLRKLIFCQATIIGHAYCEHMAVVKLACSETTVNR. Residues 215 to 235 traverse the membrane as a helical segment; sequence AYGLTVALLVVGLDVLAIGVS. The Cytoplasmic portion of the chain corresponds to 236 to 255; it reads YAHILQAVLKVPGNEARLKA. The chain crosses the membrane as a helical span at residues 256 to 276; that stretch reads FSTCGSHVCVILVFYIPGMFS. Residues 277-291 are Extracellular-facing; that stretch reads FLTHRFGHHVPHHVH. The helical transmembrane segment at 292–312 threads the bilayer; it reads VLLAILYRLVPPALNPLVYRV. Residues 313-319 are Cytoplasmic-facing; sequence KTQKIHQ.

Belongs to the G-protein coupled receptor 1 family.

The protein resides in the cell membrane. Odorant receptor. The protein is Putative olfactory receptor 52L2 (OR52L2P) of Homo sapiens (Human).